A 230-amino-acid polypeptide reads, in one-letter code: MEAMAVFSGSNLFATSSLLLTTNSKTRYSQLRTTQNLSAFSSKSHLFSPSSTSSSYPKTFRTRSSTESGIFLPRLITSLEQVDQAYIMVKPDGVQRGLVGEIISRFEKKGFKLTGLKLFQCSKELAEEHYKHLNQKSFFPKLIEYITSGPVVSMAWEGVGVVPSARKLIGATDPLQAEPGTIRGDFAVQTGRNIIHGSDSPENGEREIALWFKEGELCEWTPVQEPWLRE.

The N-terminal 64 residues, 1-64 (MEAMAVFSGS…SYPKTFRTRS (64 aa)), are a transit peptide targeting the chloroplast. 6 residues coordinate ATP: Lys-90, Phe-138, Arg-166, Thr-172, Arg-183, and Asn-193. His-196 functions as the Pros-phosphohistidine intermediate in the catalytic mechanism.

It belongs to the NDK family. It depends on Mg(2+) as a cofactor.

It is found in the plastid. Its subcellular location is the chloroplast. It catalyses the reaction a 2'-deoxyribonucleoside 5'-diphosphate + ATP = a 2'-deoxyribonucleoside 5'-triphosphate + ADP. The enzyme catalyses a ribonucleoside 5'-diphosphate + ATP = a ribonucleoside 5'-triphosphate + ADP. Functionally, major role in the synthesis of nucleoside triphosphates other than ATP. The ATP gamma phosphate is transferred to the NDP beta phosphate via a ping-pong mechanism, using a phosphorylated active-site intermediate. The polypeptide is Nucleoside diphosphate kinase 2, chloroplastic (NDPK2) (Pisum sativum (Garden pea)).